The sequence spans 429 residues: L-cysteine:1D-myo-inositol 2-amino-2-deoxy-alpha-D-glucopyranoside ligase (429 aa).

Cysteine 60 contributes to the Zn(2+) binding site. Residues 60 to 63 (CGIT), threonine 75, and 98 to 100 (NIT) each bind L-cysteinyl-5'-AMP. A 'HIGH' region motif is present at residues 62 to 72 (ITPYDATHLGH). A 'ERGGDP' region motif is present at residues 204 to 209 (ERGGDP). Tryptophan 244 contributes to the L-cysteinyl-5'-AMP binding site. Cysteine 248 is a Zn(2+) binding site. 266–268 (GSD) contributes to the L-cysteinyl-5'-AMP binding site. Position 273 (histidine 273) interacts with Zn(2+). Isoleucine 300 serves as a coordination point for L-cysteinyl-5'-AMP. Residues 306–310 (KMSKS) carry the 'KMSKS' region motif.

The protein belongs to the class-I aminoacyl-tRNA synthetase family. MshC subfamily. Monomer. Zn(2+) serves as cofactor.

It catalyses the reaction 1D-myo-inositol 2-amino-2-deoxy-alpha-D-glucopyranoside + L-cysteine + ATP = 1D-myo-inositol 2-(L-cysteinylamino)-2-deoxy-alpha-D-glucopyranoside + AMP + diphosphate + H(+). Functionally, catalyzes the ATP-dependent condensation of GlcN-Ins and L-cysteine to form L-Cys-GlcN-Ins. This is L-cysteine:1D-myo-inositol 2-amino-2-deoxy-alpha-D-glucopyranoside ligase from Mycolicibacterium vanbaalenii (strain DSM 7251 / JCM 13017 / BCRC 16820 / KCTC 9966 / NRRL B-24157 / PYR-1) (Mycobacterium vanbaalenii).